The following is a 332-amino-acid chain: RNA polymerase principal sigma factor HrdD (332 aa).

The tract at residues 1 to 21 is disordered; sequence MATRAVARRQPAASGETGAAG. A Polymerase core binding motif is present at residues 124–137; the sequence is DLIQEGNAGLVRAV. Positions 294–313 form a DNA-binding region, H-T-H motif; that stretch reads LTEVGKQHGLTRERIRQIEK.

The protein belongs to the sigma-70 factor family.

Sigma factors are initiation factors that promote the attachment of RNA polymerase to specific initiation sites and are then released. The sequence is that of RNA polymerase principal sigma factor HrdD (hrdD) from Streptomyces griseus.